A 533-amino-acid polypeptide reads, in one-letter code: Sterol 26-hydroxylase, mitochondrial (533 aa).

The N-terminal 32 residues, Met1–Ala32, are a transit peptide targeting the mitochondrion. The interval Ile34–Ala60 is disordered. Lys142, Lys232, Lys285, Lys296, and Lys375 each carry N6-acetyllysine. The sterol-binding stretch occupies residues Pro386–Pro400. Cys479 serves as a coordination point for heme. Lys512 and Lys523 each carry N6-acetyllysine.

It belongs to the cytochrome P450 family. As to quaternary structure, interacts with HSP70; this interaction is required for initial targeting to mitochondria. The cofactor is heme. Acetylation of Lys-125 and Lys-285 is observed in liver mitochondria from fasted mice but not from fed mice. As to expression, expressed in the gray and white matter of cerebellum (at protein level).

The protein resides in the mitochondrion inner membrane. The enzyme catalyses 5beta-cholestane-3alpha,7alpha,12alpha-triol + 6 reduced [adrenodoxin] + 3 O2 + 5 H(+) = (25R)-3alpha,7alpha,12alpha-trihydroxy-5beta-cholestan-26-oate + 6 oxidized [adrenodoxin] + 4 H2O. The catalysed reaction is cholestanol + 2 reduced [adrenodoxin] + O2 + 2 H(+) = (25R)-26-hydroxycholestanol + 2 oxidized [adrenodoxin] + H2O. It carries out the reaction (25R)-3beta-hydroxycholest-5-en-7-one-26-al + 2 reduced [adrenodoxin] + O2 + H(+) = (25R)-3beta-hydroxycholest-5-en-7-one-26-oate + 2 oxidized [adrenodoxin] + H2O. It catalyses the reaction (25R)-3beta,26-dihydroxycholest-5-en-7-one + 2 reduced [adrenodoxin] + O2 + 2 H(+) = (25R)-3beta-hydroxycholest-5-en-7-one-26-al + 2 oxidized [adrenodoxin] + 2 H2O. The enzyme catalyses 7-oxocholesterol + 2 reduced [adrenodoxin] + O2 + 2 H(+) = (25R)-3beta,26-dihydroxycholest-5-en-7-one + 2 oxidized [adrenodoxin] + H2O. The catalysed reaction is calciol + 2 reduced [adrenodoxin] + O2 + 2 H(+) = calcidiol + 2 oxidized [adrenodoxin] + H2O. It carries out the reaction (25R)-5beta-cholestane-3alpha,7alpha,12alpha,26-tetrol + 2 reduced [adrenodoxin] + O2 + 2 H(+) = (25R)-3alpha,7alpha,12alpha-trihydroxy-5beta-cholestan-26-al + 2 oxidized [adrenodoxin] + 2 H2O. It catalyses the reaction 2 reduced [adrenodoxin] + cholesterol + O2 + 2 H(+) = (25R)-cholest-5-ene-3beta,26-diol + 2 oxidized [adrenodoxin] + H2O. The enzyme catalyses (25R)-3beta,4beta-dihydroxycholest-5-en-26-al + 2 reduced [adrenodoxin] + O2 + H(+) = (25R)-3beta,4beta-dihydroxycholest-5-en-26-oate + 2 oxidized [adrenodoxin] + H2O. The catalysed reaction is (25R)-4beta,26-dihydroxycholesterol + 2 reduced [adrenodoxin] + O2 + 2 H(+) = (25R)-3beta,4beta-dihydroxycholest-5-en-26-al + 2 oxidized [adrenodoxin] + 2 H2O. It carries out the reaction 4beta-hydroxycholesterol + 2 reduced [adrenodoxin] + O2 + 2 H(+) = (25R)-4beta,26-dihydroxycholesterol + 2 oxidized [adrenodoxin] + H2O. It catalyses the reaction (25R)-3beta-hydroxy-5-cholesten-26-al + 2 reduced [adrenodoxin] + O2 + H(+) = (25R)-3beta-hydroxy-5-cholestenoate + 2 oxidized [adrenodoxin] + H2O. The enzyme catalyses (25R)-cholest-5-ene-3beta,26-diol + 2 reduced [adrenodoxin] + O2 + 2 H(+) = (25R)-3beta-hydroxy-5-cholesten-26-al + 2 oxidized [adrenodoxin] + 2 H2O. The catalysed reaction is (25R)-3alpha,7alpha,12alpha-trihydroxy-5beta-cholestan-26-al + 2 reduced [adrenodoxin] + O2 + H(+) = (25R)-3alpha,7alpha,12alpha-trihydroxy-5beta-cholestan-26-oate + 2 oxidized [adrenodoxin] + H2O. It carries out the reaction 5beta-cholestane-3alpha,7alpha,12alpha-triol + 2 reduced [adrenodoxin] + O2 + 2 H(+) = (25R)-5beta-cholestane-3alpha,7alpha,12alpha,26-tetrol + 2 oxidized [adrenodoxin] + H2O. It participates in hormone biosynthesis; cholecalciferol biosynthesis. The protein operates within steroid metabolism; cholesterol degradation. Its pathway is lipid metabolism; bile acid biosynthesis. Its function is as follows. Cytochrome P450 monooxygenase that catalyzes regio- and stereospecific hydroxylation of cholesterol and its derivatives. Hydroxylates (with R stereochemistry) the terminal methyl group of cholesterol side-chain in a three step reaction to yield at first a C26 alcohol, then a C26 aldehyde and finally a C26 acid. Regulates cholesterol homeostasis by catalyzing the conversion of excess cholesterol to bile acids via both the 'neutral' (classic) and the 'acid' (alternative) pathways. May also regulate cholesterol homeostasis via generation of active oxysterols, which act as ligands for NR1H2 and NR1H3 nuclear receptors, modulating the transcription of genes involved in lipid metabolism. Plays a role in cholestanol metabolism in the cerebellum. Similarly to cholesterol, hydroxylates cholestanol and may facilitate sterol diffusion through the blood-brain barrier to the systemic circulation for further degradation. Also hydroxylates retinal 7-ketocholesterol, a noxious oxysterol with pro-inflammatory and pro-apoptotic effects, and may play a role in its elimination from the retinal pigment epithelium. May play a redundant role in vitamin D biosynthesis. Catalyzes 25-hydroxylation of vitamin D3 that is required for its conversion to a functionally active form. This chain is Sterol 26-hydroxylase, mitochondrial, found in Mus musculus (Mouse).